Consider the following 97-residue polypeptide: Aspartyl/glutamyl-tRNA(Asn/Gln) amidotransferase subunit C (97 aa).

Belongs to the GatC family. In terms of assembly, heterotrimer of A, B and C subunits.

It catalyses the reaction L-glutamyl-tRNA(Gln) + L-glutamine + ATP + H2O = L-glutaminyl-tRNA(Gln) + L-glutamate + ADP + phosphate + H(+). It carries out the reaction L-aspartyl-tRNA(Asn) + L-glutamine + ATP + H2O = L-asparaginyl-tRNA(Asn) + L-glutamate + ADP + phosphate + 2 H(+). In terms of biological role, allows the formation of correctly charged Asn-tRNA(Asn) or Gln-tRNA(Gln) through the transamidation of misacylated Asp-tRNA(Asn) or Glu-tRNA(Gln) in organisms which lack either or both of asparaginyl-tRNA or glutaminyl-tRNA synthetases. The reaction takes place in the presence of glutamine and ATP through an activated phospho-Asp-tRNA(Asn) or phospho-Glu-tRNA(Gln). The chain is Aspartyl/glutamyl-tRNA(Asn/Gln) amidotransferase subunit C from Prochlorococcus marinus (strain MIT 9215).